Here is a 320-residue protein sequence, read N- to C-terminus: Stress-induced-phosphoprotein 1 (320 aa).

TPR repeat units lie at residues 5–38 (AIAE…DPSN), 40–72 (TFYN…GRET), 80–113 (AKAM…FRDP), 140–173 (AQEE…DPEN), 175–207 (ILYS…DSKF), and 208–241 (IKGY…DPSN). Residues 241 to 269 (NEEAREGVRNCLRSNDEDPEKAKERSLAD) are disordered. Over residues 242–269 (EEAREGVRNCLRSNDEDPEKAKERSLAD) the composition is skewed to basic and acidic residues. Positions 269-308 (DPEVQEILRDPGMRMILEQMSNDPGAVREHLKNPEIFQKL) constitute an STI1 domain.

As to quaternary structure, forms a complex with hsp-1/hsp70 and daf-21/hsp90. Interacts with daf-21/hsp90 (via the C-terminal MEEVD pentapeptide). In terms of tissue distribution, expressed ubiquitously in the whole body. Detected predominantly in the pharyngeal muscles, vulva epithelial cells, striated body-wall muscles, spermathecae and intestinal cell ring. Also observed in the tail regions of hermaphrodite and in the sensory rays and spicules of males.

It localises to the cytoplasm. Functionally, plays a role in gonad development. Up-regulates longevity and thermotolerance. Binds daf-21/hsp90 and inhibits its ATPase activity. In Caenorhabditis elegans, this protein is Stress-induced-phosphoprotein 1.